Reading from the N-terminus, the 88-residue chain is Alpha-latrotoxin-associated low molecular weight protein-2 (88 aa).

Positions Met1–Gly19 are cleaved as a signal peptide. Residue Gln20 is modified to Pyrrolidone carboxylic acid. 3 disulfides stabilise this stretch: Cys30–Cys66, Cys46–Cys62, and Cys49–Cys75.

This sequence belongs to the arthropod CHH/MIH/GIH/VIH hormone family. Post-translationally, the N-terminus is blocked. As to expression, expressed by the venom gland.

It localises to the secreted. Its function is as follows. May increase the toxicity of alpha-latrotoxin and/or other venom components. Is non-toxic to mice and to the cockroach Periplaneta americana. This is Alpha-latrotoxin-associated low molecular weight protein-2 from Latrodectus tredecimguttatus (Mediterranean black widow spider).